The sequence spans 108 residues: Small ribosomal subunit protein eS25w (108 aa).

The interval M1–K36 is disordered. Positions K22–G31 are enriched in basic residues.

It belongs to the eukaryotic ribosomal protein eS25 family.

The chain is Small ribosomal subunit protein eS25w (RPS25E) from Arabidopsis thaliana (Mouse-ear cress).